The chain runs to 89 residues: Helix-loop-helix protein 15 (89 aa).

The segment at 1–32 (MLMEDGGLDTTSEEYRKLSKAERRKRRRATPK) is disordered. Residues 22–32 (ERRKRRRATPK) show a composition bias toward basic residues. A basic motif region spans residues 32-45 (KYRNLHATRERIRV). Residues 32–84 (KYRNLHATRERIRVESFNMAFSQLRALLPTLPVEKKLSKIEILRFSIAYISFL) enclose the bHLH domain. The interval 46–84 (ESFNMAFSQLRALLPTLPVEKKLSKIEILRFSIAYISFL) is helix-loop-helix motif.

Expressed in sensory head neurons of the lateral ganglion.

The protein resides in the nucleus. In terms of biological role, transcription factor which binds the E box motif 5'-CA[TC][AG]TG-3'. Involved in modulating physiological aging, probably by regulating expression of branched-chain amino acid transferase-1, bcat-1. This is Helix-loop-helix protein 15 from Caenorhabditis elegans.